Consider the following 557-residue polypeptide: Potassium-transporting ATPase potassium-binding subunit (557 aa).

The next 10 membrane-spanning stretches (helical) occupy residues 6–26 (IQLL…GLGL), 59–79 (ALSL…ILFF), 127–147 (AGLT…LLAL), 172–192 (LYVL…FGVV), 247–267 (ISNF…VFLY), 278–298 (WAIF…VWTF), 363–383 (IVFG…LLTV), 410–430 (ILGI…SVSV), 475–495 (VMIA…VLVI), and 520–540 (FYIL…FPVL).

This sequence belongs to the KdpA family. The system is composed of three essential subunits: KdpA, KdpB and KdpC.

The protein resides in the cell inner membrane. Functionally, part of the high-affinity ATP-driven potassium transport (or Kdp) system, which catalyzes the hydrolysis of ATP coupled with the electrogenic transport of potassium into the cytoplasm. This subunit binds the periplasmic potassium ions and delivers the ions to the membrane domain of KdpB through an intramembrane tunnel. This Leptospira interrogans serogroup Icterohaemorrhagiae serovar Lai (strain 56601) protein is Potassium-transporting ATPase potassium-binding subunit.